Reading from the N-terminus, the 347-residue chain is NADH-ubiquinone oxidoreductase chain 2 (347 aa).

10 consecutive transmembrane segments (helical) span residues 4–21 (LILS…LIVM), 26–45 (WLMV…PVLM), 59–79 (YFLT…INLI), 96–116 (IIMT…FWVP), 122–142 (IQLS…MSIL), 148–168 (AINM…GGWG), 201–221 (ALLN…TFML), 242–262 (TTIL…GFLP), 274–294 (DSII…YFYM), and 326–346 (LPPL…LMLL).

The protein belongs to the complex I subunit 2 family. As to quaternary structure, core subunit of respiratory chain NADH dehydrogenase (Complex I) which is composed of 45 different subunits. Interacts with TMEM242.

Its subcellular location is the mitochondrion inner membrane. It catalyses the reaction a ubiquinone + NADH + 5 H(+)(in) = a ubiquinol + NAD(+) + 4 H(+)(out). Its function is as follows. Core subunit of the mitochondrial membrane respiratory chain NADH dehydrogenase (Complex I) which catalyzes electron transfer from NADH through the respiratory chain, using ubiquinone as an electron acceptor. Essential for the catalytic activity and assembly of complex I. The protein is NADH-ubiquinone oxidoreductase chain 2 of Syconycteris australis (Southern blossom bat).